A 130-amino-acid polypeptide reads, in one-letter code: Albumin-1 E (130 aa).

A signal peptide spans 1–26 (MASVKLASLIVLFATLGMFLTKNVGA). Cystine bridges form between C29–C46, C33–C48, and C41–C58. 2 consecutive propeptides follow at residues 64 to 69 (VFLKGN) and 123 to 130 (LLKSVSTA).

In terms of processing, the C-terminal glycine may be removed from PA1b.

Its function is as follows. PA1b binds to basic 7S globulin (BG) and stimulates its phosphorylation activity. Involved in the signal transduction system to regulate the growth and differentiation as a hormone peptide. Toxic to various insects through binding to a high affinity binding site in the insect gut. This is Albumin-1 E from Pisum sativum (Garden pea).